The sequence spans 763 residues: MSVVELEDGVYESTAVIDNGSFGTRTIRFETGRLAQQAAGSAVAYLDDETMLLSATTASKNPKDHFDFFPLTVDVEERMYAAGRIPGSFFRREGRPSTDAILTCRLIDRPLRPSFVDGLRNEIQVVVTVMSLDPKDLYDVLAINAASMSTQLAGLPFSGPVGGARIALIDGTWVAFPTVEQLERAVFDMVVAGRIVGDGDSADVAIMMVEAEATENVVELVAGGAQAPTEAVVAEGLEAAKPFIKALCAAQQELADRAAKPAGEYPVFPDYEADVYDAVASVATEALAEALTIAGKTERNDRTDEIKVEVLERLAEPYAGREKEIGAAFRSLTKKLVRQRILTDHFRIDGRGITDIRALSAEVAVIPRAHGSALFERGETQILGVTTLDMIKMAQQIDSLGPENTKRYMHHYNFPPYSTGETGRVGSPKRREIGHGALAERALVPVLPSIEEFPYAIRQVSEALGSNGSTSMGSVCASTLALLNAGVPLKAPVAGIAMGLVSDDVDVDGKVEKRYVALTDILGAEDAFGDMDFKVAGTKDFVTALQLDTKLDGIPSQVLAGALSQAKDARLTILDVMAEAIDRPDEMSPYAPRITTIKVPVDKIGEVIGPKGKMINSITEETGAQISIEDDGTVFVGAADGLSAQAAIDKINAIANPQLPKVGERFLGTVVKTTDFGAFVSLLPGRDGLVHISKLGKGKRIAKVEDVVKVGDKLRVEIADIDNRGKISLVLVAEESAESAESAGDKGAEKAEGAAADVTPAEA.

Positions 526 and 532 each coordinate Mg(2+). The 60-residue stretch at 592-651 folds into the KH domain; it reads PRITTIKVPVDKIGEVIGPKGKMINSITEETGAQISIEDDGTVFVGAADGLSAQAAIDKI. One can recognise an S1 motif domain in the interval 663–732; the sequence is GERFLGTVVK…NRGKISLVLV (70 aa). Residues 739–763 form a disordered region; sequence SAESAGDKGAEKAEGAAADVTPAEA. The span at 743-752 shows a compositional bias: basic and acidic residues; that stretch reads AGDKGAEKAE.

Belongs to the polyribonucleotide nucleotidyltransferase family. The cofactor is Mg(2+).

The protein resides in the cytoplasm. The catalysed reaction is RNA(n+1) + phosphate = RNA(n) + a ribonucleoside 5'-diphosphate. Its function is as follows. Involved in mRNA degradation. Catalyzes the phosphorolysis of single-stranded polyribonucleotides processively in the 3'- to 5'-direction. In Mycolicibacterium smegmatis (strain ATCC 700084 / mc(2)155) (Mycobacterium smegmatis), this protein is Polyribonucleotide nucleotidyltransferase.